The primary structure comprises 49 residues: Large ribosomal subunit protein bL33 (49 aa).

The protein belongs to the bacterial ribosomal protein bL33 family.

This chain is Large ribosomal subunit protein bL33, found in Streptococcus gordonii (strain Challis / ATCC 35105 / BCRC 15272 / CH1 / DL1 / V288).